Here is a 202-residue protein sequence, read N- to C-terminus: Odorant-binding protein 59a (202 aa).

A signal peptide spans 1–20 (MKQLIFLLICLSCGTCSIYA). Residues 43–53 (HRQDEDEDRGR) show a composition bias toward basic and acidic residues. The tract at residues 43–105 (HRQDEDEDRG…QSDGRNHTSN (63 aa)) is disordered. The span at 54-65 (GGQGRQGNGYEY) shows a compositional bias: gly residues.

The protein belongs to the PBP/GOBP family. Expressed in non-neuronal cells in hygrosensitive sensilla in the second chamber of the sacculus of the antenna third segment (at protein level).

Its subcellular location is the secreted. In terms of biological role, odorant-binding protein required for hygrotaxis behavior in humidity-detecting sensilla. In Drosophila melanogaster (Fruit fly), this protein is Odorant-binding protein 59a.